The primary structure comprises 352 residues: Ion-translocating oxidoreductase complex subunit D (352 aa).

Helical transmembrane passes span 20–40 (IMLL…WFFG), 42–62 (GTLV…ALVL), 78–109 (ALLT…VIIA), 123–143 (PAMI…TSWL), and 148–168 (IAVN…GHTA). Thr187 carries the FMN phosphoryl threonine modification. Transmembrane regions (helical) follow at residues 214 to 234 (ILAG…GVWL), 242 to 262 (WHIP…GWLF), 267 to 287 (LAAP…FFIL), 301 to 321 (LIFG…GGYP), and 322 to 342 (DGVA…DYYT).

Belongs to the NqrB/RnfD family. In terms of assembly, the complex is composed of six subunits: RsxA, RsxB, RsxC, RsxD, RsxE and RsxG. FMN is required as a cofactor.

It is found in the cell inner membrane. Its function is as follows. Part of a membrane-bound complex that couples electron transfer with translocation of ions across the membrane. Required to maintain the reduced state of SoxR. The sequence is that of Ion-translocating oxidoreductase complex subunit D from Escherichia coli O6:H1 (strain CFT073 / ATCC 700928 / UPEC).